The sequence spans 240 residues: Uridylate kinase (240 aa).

13–16 provides a ligand contact to ATP; sequence KASG. The tract at residues 21-26 is involved in allosteric activation by GTP; sequence GSQGFG. G55 serves as a coordination point for UMP. ATP is bound by residues G56 and R60. UMP contacts are provided by residues D75 and 136 to 143; that span reads TGNPFFTT. Residues T163, Q164, Y169, and D172 each contribute to the ATP site.

It belongs to the UMP kinase family. Homohexamer.

Its subcellular location is the cytoplasm. The enzyme catalyses UMP + ATP = UDP + ADP. It functions in the pathway pyrimidine metabolism; CTP biosynthesis via de novo pathway; UDP from UMP (UMPK route): step 1/1. With respect to regulation, allosterically activated by GTP. Inhibited by UTP. Its function is as follows. Catalyzes the reversible phosphorylation of UMP to UDP. The polypeptide is Uridylate kinase (Sinorhizobium medicae (strain WSM419) (Ensifer medicae)).